A 539-amino-acid polypeptide reads, in one-letter code: CTP synthase (539 aa).

Positions 1–268 are amidoligase domain; the sequence is MSFKSIFLTG…SDFLLNKLGF (268 aa). S14 contacts CTP. S14 serves as a coordination point for UTP. Residue 15–20 participates in ATP binding; it reads SLGKGL. L-glutamine is bound at residue Y55. D72 serves as a coordination point for ATP. D72 and E142 together coordinate Mg(2+). Residues 149 to 151, 188 to 193, and K224 contribute to the CTP site; these read DIE and KTKPTQ. Residues 188–193 and K224 contribute to the UTP site; that span reads KTKPTQ. One can recognise a Glutamine amidotransferase type-1 domain in the interval 294–532; the sequence is RIGLVGKYLE…IRAAKAYSLE (239 aa). G353 lines the L-glutamine pocket. Residue C380 is the Nucleophile; for glutamine hydrolysis of the active site. L-glutamine contacts are provided by residues 381–384, E404, and R460; that span reads LGMQ. Residues H505 and E507 contribute to the active site.

This sequence belongs to the CTP synthase family. As to quaternary structure, homotetramer.

It catalyses the reaction UTP + L-glutamine + ATP + H2O = CTP + L-glutamate + ADP + phosphate + 2 H(+). The catalysed reaction is L-glutamine + H2O = L-glutamate + NH4(+). It carries out the reaction UTP + NH4(+) + ATP = CTP + ADP + phosphate + 2 H(+). It participates in pyrimidine metabolism; CTP biosynthesis via de novo pathway; CTP from UDP: step 2/2. With respect to regulation, allosterically activated by GTP, when glutamine is the substrate; GTP has no effect on the reaction when ammonia is the substrate. The allosteric effector GTP functions by stabilizing the protein conformation that binds the tetrahedral intermediate(s) formed during glutamine hydrolysis. Inhibited by the product CTP, via allosteric rather than competitive inhibition. In terms of biological role, catalyzes the ATP-dependent amination of UTP to CTP with either L-glutamine or ammonia as the source of nitrogen. Regulates intracellular CTP levels through interactions with the four ribonucleotide triphosphates. The protein is CTP synthase of Chlamydia trachomatis serovar A (strain ATCC VR-571B / DSM 19440 / HAR-13).